We begin with the raw amino-acid sequence, 313 residues long: MSNTHITDWSSKDGEFRRQVSSFRERISPEHKYFQPEKDRYHLYVSYACPWAHRTLIVRKLKGLENVIPVHVVGWLMGPNGWNFDKENDSTGDPLYNSPYLRNLYFRADPNYNMRFTVPVLWDSKYNTIVNNESAEIIRMFNDAFNEVIEDEEKRVVDLYPSSLRTKIDELNDYFYDTVNNGVYKTGFATTAEAYEKNVRVVFQGLDRLEQVLKESKGPFLLGDHLTETDVRLYTTIVRFDPVYVQHFKCNIGTIRHNYPHINQWLKRLYWKHPAFHETTDFKHIKCHYTQSHTQINPLGITPLGPIPNVEYF.

C49 (nucleophile) is an active-site residue. A GST C-terminal domain is found at 161-289 (PSSLRTKIDE…TDFKHIKCHY (129 aa)).

Belongs to the GST superfamily. Omega family.

The protein localises to the cytoplasm. It is found in the nucleus. The protein resides in the golgi apparatus. The enzyme catalyses RX + glutathione = an S-substituted glutathione + a halide anion + H(+). It carries out the reaction L-dehydroascorbate + 2 glutathione = glutathione disulfide + L-ascorbate. In terms of biological role, active as '1-Cys' thiol transferase against beta-hydroxyethyl disulfide (HED), as dehydroascorbate reductase and as dimethylarsinic acid reductase, while not active against the standard GST substrate 1-chloro-2,4-dinitrobenzene (CDNB). May be involved in cell wall organization and biogenesis. The polypeptide is Glutathione S-transferase omega-like 2 (gto2) (Schizosaccharomyces pombe (strain 972 / ATCC 24843) (Fission yeast)).